Reading from the N-terminus, the 199-residue chain is Recombination protein RecR (199 aa).

A C4-type zinc finger spans residues 57–72 (CQACRTFTEETLCPIC). In terms of domain architecture, Toprim spans 81–176 (EVICVVETPA…SVSRIAHGVP (96 aa)).

This sequence belongs to the RecR family.

Functionally, may play a role in DNA repair. It seems to be involved in an RecBC-independent recombinational process of DNA repair. It may act with RecF and RecO. The sequence is that of Recombination protein RecR from Shewanella woodyi (strain ATCC 51908 / MS32).